The chain runs to 363 residues: Chorismate synthase (363 aa).

A disordered region spans residues 44 to 63 (DLDRRKPGTSRHTTQRQEPD). Arg-48 and Arg-54 together coordinate NADP(+). FMN contacts are provided by residues 125 to 127 (RSS), 237 to 238 (NA), Gly-277, 292 to 296 (KATSS), and Arg-318.

This sequence belongs to the chorismate synthase family. Homotetramer. It depends on FMNH2 as a cofactor.

It catalyses the reaction 5-O-(1-carboxyvinyl)-3-phosphoshikimate = chorismate + phosphate. The protein operates within metabolic intermediate biosynthesis; chorismate biosynthesis; chorismate from D-erythrose 4-phosphate and phosphoenolpyruvate: step 7/7. Its function is as follows. Catalyzes the anti-1,4-elimination of the C-3 phosphate and the C-6 proR hydrogen from 5-enolpyruvylshikimate-3-phosphate (EPSP) to yield chorismate, which is the branch point compound that serves as the starting substrate for the three terminal pathways of aromatic amino acid biosynthesis. This reaction introduces a second double bond into the aromatic ring system. The sequence is that of Chorismate synthase from Pseudomonas fluorescens (strain SBW25).